We begin with the raw amino-acid sequence, 339 residues long: Protein RecA (339 aa).

74–81 (GPESSGKT) is an ATP binding site.

Belongs to the RecA family.

Its subcellular location is the cytoplasm. Can catalyze the hydrolysis of ATP in the presence of single-stranded DNA, the ATP-dependent uptake of single-stranded DNA by duplex DNA, and the ATP-dependent hybridization of homologous single-stranded DNAs. It interacts with LexA causing its activation and leading to its autocatalytic cleavage. This chain is Protein RecA, found in Phytoplasma mali (strain AT).